The chain runs to 274 residues: Thiazole synthase (274 aa).

The active-site Schiff-base intermediate with DXP is K111. Residues G172, 198-199, and 220-221 each bind 1-deoxy-D-xylulose 5-phosphate; these read AG and NT.

It belongs to the ThiG family. As to quaternary structure, homotetramer. Forms heterodimers with either ThiH or ThiS.

It localises to the cytoplasm. The catalysed reaction is [ThiS sulfur-carrier protein]-C-terminal-Gly-aminoethanethioate + 2-iminoacetate + 1-deoxy-D-xylulose 5-phosphate = [ThiS sulfur-carrier protein]-C-terminal Gly-Gly + 2-[(2R,5Z)-2-carboxy-4-methylthiazol-5(2H)-ylidene]ethyl phosphate + 2 H2O + H(+). It participates in cofactor biosynthesis; thiamine diphosphate biosynthesis. Functionally, catalyzes the rearrangement of 1-deoxy-D-xylulose 5-phosphate (DXP) to produce the thiazole phosphate moiety of thiamine. Sulfur is provided by the thiocarboxylate moiety of the carrier protein ThiS. In vitro, sulfur can be provided by H(2)S. The protein is Thiazole synthase of Gloeobacter violaceus (strain ATCC 29082 / PCC 7421).